The sequence spans 957 residues: Receptor-like protein 53 (957 aa).

The N-terminal stretch at 1–30 is a signal peptide; the sequence is MEGFWNSKSIIRITLSFIFLFICHFLDVLA. The Extracellular portion of the chain corresponds to 31-910; it reads APTRNLCRPE…EEEDEDLISW (880 aa). N-linked (GlcNAc...) asparagine glycosylation is found at Asn78, Asn114, Asn143, Asn167, and Asn191. LRR repeat units follow at residues 120-143, 144-170, 172-192, 193-216, 217-240, 241-266, 268-287, 288-312, 313-336, 338-360, 361-384, and 386-409; these read LHFLTTLDLSFNDFKGQITSSIEN, LSHLTYLDLSSNHFSGQILNSIGNLSR, TYLNLFDNQFSGQAPSSICNL, SHLTFLDLSYNRFFGQFPSSIGGL, SHLTTLSLFSNKFSGQIPSSIGNL, SNLTTLDLSNNNFSGQIPSFIGNLSQ, TFLGLFSNNFVGEIPSSFGN, LNQLTRLYVDDNKLSGNFPNVLLNL, TGLSLLSLSNNKFTGTLPPNITSL, NLMDFDASDNAFTGTFPSFLFTI, PSLTYIRLNGNQLKGTLEFGNISS, and SNLYELDIGNNNFIGPIPSSISKL. N-linked (GlcNAc...) asparagine glycosylation is found at Asn239, Asn242, Asn252, and Asn263. 2 N-linked (GlcNAc...) asparagine glycosylation sites follow: Asn311 and Asn332. Asn381 is a glycosylation site (N-linked (GlcNAc...) asparagine). The LRR 13; degenerate repeat unit spans residues 412–433; the sequence is LFRLDISHLNTQGPVDFSIFSH. 16 LRR repeats span residues 434 to 458, 460 to 483, 486 to 509, 510 to 533, 535 to 556, 558 to 580, 581 to 604, 605 to 629, 631 to 651, 652 to 674, 675 to 697, 698 to 721, 765 to 789, 790 to 813, 814 to 837, and 839 to 862; these read LKSLLDLNISHLNTTTRIDLNYFLS, FKRLLLLDLSGNHVSATNKSSVSD, SQLIQSLYLSGCGITEFPEFVRTQ, HELGFLDISNNKIKGQVPDWLWRL, ILYYVNLSNNTLIGFQRPSKPE, SLLYLLGSNNNFIGKIPSFICGL, RSLNTLDLSDNNFNGSIPRCMGHL, KSTLSVLNLRQNHLSGGLPKQIFEI, RSLDVGHNQLVGKLPRSLSFF, STLEVLNVESNRINDTFPFWLSS, LPKLQVLVLRSNAFHGPIHEATF, PELRIIDISHNRFNGTLPTEYFVK, LTIYTAVDFSGNRFEGEIPKSIGLL, KELLVLSLSNNAFSGHMPSSMGNL, TALESLDVSKNKLTGEIPQELGDL, and FLAYMNFSHNQLAGLVPGGQQFLT. Asn441, Asn446, and Asn477 each carry an N-linked (GlcNAc...) asparagine glycan. N-linked (GlcNAc...) asparagine glycans are attached at residues Asn540 and Asn543. Residue Asn594 is glycosylated (N-linked (GlcNAc...) asparagine). The N-linked (GlcNAc...) asparagine glycan is linked to Asn665. N-linked (GlcNAc...) asparagine glycosylation occurs at Asn711. Asn812 carries an N-linked (GlcNAc...) asparagine glycan. Residues Asn844 and Asn864 are each glycosylated (N-linked (GlcNAc...) asparagine). A helical transmembrane segment spans residues 911–931; sequence IAAAIGFGPGIAFGLMFGYIL. The Cytoplasmic portion of the chain corresponds to 932–957; the sequence is VSYKPEWFMNPFDRNNRRQKRHKTTH.

This sequence belongs to the RLP family.

It is found in the cell membrane. In Arabidopsis thaliana (Mouse-ear cress), this protein is Receptor-like protein 53.